A 357-amino-acid polypeptide reads, in one-letter code: Dynein axonemal assembly factor 10 (357 aa).

6 WD repeats span residues 63–105, 115–154, 162–205, 207–249, 257–297, and 319–357; these read EKAK…VPVY, NTIDGVGGLGIGEGAPEIVTGSRDGTVKVWDPRQKDDPVA, ENKR…LRWE, NIKN…PTKG, AHKS…QRSK, and LSTQPVSSLDWSPDKRGLCICSSFDQMVRVLIVTKLHKI.

As to quaternary structure, component of the PAQosome complex which is responsible for the biogenesis of several protein complexes and which consists of R2TP complex members RUVBL1, RUVBL2, RPAP3 and PIH1D1, URI complex members PFDN2, PFDN6, PDRG1, UXT and URI1 as well as ASDURF, POLR2E and DNAAF10/WDR92. Interacts with PIH1D1; the interaction associates DNAAF10 with the R2TP complex. Interacts with several dynein axonemal assembly factors.

It is found in the dynein axonemal particle. Key assembly factor specifically required for the stability of axonemal dynein heavy chains in cytoplasm. The chain is Dynein axonemal assembly factor 10 (DNAAF10) from Bos taurus (Bovine).